Here is a 273-residue protein sequence, read N- to C-terminus: Large ribosomal subunit protein uL2 (273 aa).

Residues 224–264 (AMNPVDHPHGGGEGRNFGKHPVTPWGIQTKGKKTRKNKRTD) form a disordered region. Residues 253–264 (KGKKTRKNKRTD) show a composition bias toward basic residues.

The protein belongs to the universal ribosomal protein uL2 family. In terms of assembly, part of the 50S ribosomal subunit. Forms a bridge to the 30S subunit in the 70S ribosome.

One of the primary rRNA binding proteins. Required for association of the 30S and 50S subunits to form the 70S ribosome, for tRNA binding and peptide bond formation. It has been suggested to have peptidyltransferase activity; this is somewhat controversial. Makes several contacts with the 16S rRNA in the 70S ribosome. In Buchnera aphidicola subsp. Acyrthosiphon pisum (strain 5A), this protein is Large ribosomal subunit protein uL2.